Reading from the N-terminus, the 314-residue chain is MVAPVWYLVAAALLVGFILFLTRSRGRAASAGQEPLHNEELAGAGRVAQPGPLEPEEPRAGGRPRRRRDLGSRLQAQRRAQRVAWAEADENEEEAVILAQEEEGVEKPAETHLSGKIGAKKLRKLEEKQARKAQREAEEAEREERKRLESQREAEWKKEEERLRLEEEQKEEEERKAREEQAQREHEEYLKLKEAFVVEEEGVGETMTEEQSQSFLTEFINYIKQSKVVLLEDLASQVGLRTQDTINRIQDLLAEGTITGVIDDRGKFIYITPEELAAVANFIRQRGRVSIAELAQASNSLIAWGRESPAQAPA.

A helical transmembrane segment spans residues M1–A28. A mediates interaction with CDK5RAP3 region spans residues M1 to S114. Residues A29–A314 lie on the Cytoplasmic side of the membrane. Disordered regions lie at residues A31–Q75 and Q100–H186. 2 positions are modified to phosphoserine: S72 and S114. The tract at residues G118–L216 is mediates interaction with TRIP4. Over residues K124 to H186 the composition is skewed to basic and acidic residues. A UFM1-interacting motif (UFIM) motif is present at residues A195 to E209. Residues L216–A314 are mediates interaction with UFL1. One can recognise a PCI domain in the interval V229–P273. K267 is covalently cross-linked (Glycyl lysine isopeptide (Lys-Gly) (interchain with G-Cter in UFM1)).

This sequence belongs to the DDRGK1 family. As to quaternary structure, component of the UFM1 ribosome E3 ligase (UREL) complex, composed of UFL1, DDRGK1 and CDK5RAP3. Interacts with (unphosphorylated) ERN1/IRE1-alpha; interaction is dependent on UFM1 and takes place in response to endoplasmic reticulum stress, regulating ERN1/IRE1-alpha stability. Interacts with NFKBIA. Interacts with SOX9. Post-translationally, ubiquitinated. Ubiquitination probably triggers proteasomal degradation and is negatively regulated by UFL1, the enzyme involved in the ufmylation of DDRGK1. In terms of processing, ufmylated; conjugated to ubiquitin-like protein UFM1, probably at Lys-267 by UFL1. The relevance of ufmylation is however unclear: as DDRGK1 acts as a substrate adapters for ufmylation, it is uncertain whether ufmylation is a collateral effect of ufmylation process or is required to regulate its activity. Widely expressed (at protein level). In the brain, highest levels in medulla oblongata, followed by cerebral cortex, cerebellum and frontal lobe.

It is found in the endoplasmic reticulum membrane. Functionally, component of the UFM1 ribosome E3 ligase (UREL) complex, a multiprotein complex that catalyzes ufmylation of endoplasmic reticulum-docked proteins. The UREL complex plays a key role in ribosome recycling by mediating mono-ufmylation of the RPL26/uL24 subunit of the 60S ribosome following ribosome dissociation: ufmylation weakens the junction between post-termination 60S subunits and SEC61 translocons, promoting release and recycling of the large ribosomal subunit from the endoplasmic reticulum membrane. Ufmylation of RPL26/uL24 and subsequent 60S ribosome recycling either take place after normal termination of translation or after ribosome stalling during cotranslational translocation at the endoplasmic reticulum. Within the UREL complex, DDRGK1 tethers the complex to the endoplasmic reticulum membrane to restrict its activity to endoplasmic reticulum-docked ribosomes and acts as an ufmylation 'reader': following RPL26/uL24 ufmylation, DDRGK1 specifically binds to ufmylated RPL26/uL24 via its UFIM motif, resulting in stable association between the 60S ribosome and the UREL complex, followed by dissociation of the 60S ribosome subunit from the endoplasmic reticulum membrane. The UREL complex is also involved in reticulophagy in response to endoplasmic reticulum stress by promoting ufmylation of proteins such as CYB5R3 and RPN1, thereby promoting lysosomal degradation of ufmylated proteins. Ufmylation-dependent reticulophagy inhibits the unfolded protein response (UPR) by regulating ERN1/IRE1-alpha stability. Acts as a regulator of immunity by promoting differentiation of B-cells into plasma cells: acts by promoting expansion of the endoplasmic reticulum and regulating the unfolded protein response (UPR). May also be required for TRIP4 ufmylation. May play a role in NF-kappa-B-mediated transcription through regulation of the phosphorylation and the degradation of NFKBIA, the inhibitor of NF-kappa-B. Plays a role in cartilage development through SOX9, inhibiting the ubiquitin-mediated proteasomal degradation of this transcriptional regulator. Required for stabilization and ufmylation of ATG9A. This chain is DDRGK domain-containing protein 1, found in Homo sapiens (Human).